We begin with the raw amino-acid sequence, 645 residues long: Putative galactocerebrosidase (645 aa).

The first 16 residues, 1–16 (MFSIFIKIILILPSIA), serve as a signal peptide directing secretion. Threonine 87 and tryptophan 128 together coordinate substrate. The N-linked (GlcNAc...) asparagine glycan is linked to asparagine 141. Substrate is bound at residue asparagine 171. The Proton donor/acceptor role is filled by glutamate 172. 2 N-linked (GlcNAc...) asparagine glycosylation sites follow: asparagine 174 and asparagine 193. Glutamate 248 acts as the Nucleophile in catalysis. A disulfide bridge links cysteine 261 with cysteine 365. 7 N-linked (GlcNAc...) asparagine glycosylation sites follow: asparagine 274, asparagine 395, asparagine 411, asparagine 532, asparagine 616, asparagine 620, and asparagine 638.

Belongs to the glycosyl hydrolase 59 family.

The enzyme catalyses a beta-D-Gal-(1&lt;-&gt;1')-ceramide + H2O = an N-acyl-sphingoid base + D-galactose. It catalyses the reaction a beta-D-galactosyl-(1&lt;-&gt;1')-N-acylsphing-4-enine + H2O = an N-acylsphing-4-enine + D-galactose. Hydrolyzes the galactose ester bonds of galactosylceramide, galactosylsphingoid base, lactosylceramide, and monogalactosyldiglyceride. C.elegans contain specific sphingoid bases, which are unique or different in structure compared to the sphingoid bases found in other animals. Two examples of these distinctive compounds are: 15-methylhexadecasphinganine and 15-methylhexadecasphing-4-enine. The polypeptide is Putative galactocerebrosidase (Caenorhabditis elegans).